Here is a 221-residue protein sequence, read N- to C-terminus: Pre-rRNA-processing protein SRD1 (221 aa).

Positions 101–110 (SKNRVTSACN) are enriched in polar residues. Disordered stretches follow at residues 101–121 (SKNRVTSACNSERRTTSQEAN) and 137–161 (ASITKKYSKKTTSRPKREKRQTILP). Positions 142–155 (KYSKKTTSRPKREK) are enriched in basic residues. A GATA-type zinc finger spans residues 168–193 (CSKCKDTWTIQWRSGPDQNRELCSPC). A disordered region spans residues 201–221 (LKKENEKKRQAADKRIDRNNP). Residues 203–221 (KENEKKRQAADKRIDRNNP) are compositionally biased toward basic and acidic residues.

It is found in the cytoplasm. Its subcellular location is the nucleus. Its function is as follows. Plays a direct or indirect role in pre-rRNA processing. The chain is Pre-rRNA-processing protein SRD1 (SRD1) from Saccharomyces cerevisiae (strain ATCC 204508 / S288c) (Baker's yeast).